The following is a 293-amino-acid chain: Inhibitory synaptic factor 1 (293 aa).

A disordered region spans residues 1–26 (MNIRGAPDLGQPSDDPSSGGERERIR). The stretch at 30–63 (KMVIGQLEGILRELKEVAKELREVVSQIDKLTSD) forms a coiled coil. Disordered regions lie at residues 120 to 186 (TPSD…RERV) and 200 to 293 (DDEE…RGKN). The segment covering 171 to 180 (VKSQLPQRTP) has biased composition (polar residues). A compositionally biased stretch (acidic residues) spans 200 to 215 (DDEEGDGEQEVEEEEV). Polar residues-rich tracts occupy residues 243-256 (SPLT…TLAP) and 264-286 (RNSS…TATR).

It belongs to the INSYN1 family. Interacts with GPHN.

It is found in the postsynaptic density. Functionally, component of the protein machinery at the inhibitory synapses, probably acting as a scaffold. Inhibitory synapses dampen neuronal activity through postsynaptic hyperpolarization. This synaptic inhibition is fundamental for the functioning of the central nervous system, shaping and orchestrating the flow of information through neuronal networks to generate a precise neural code. This chain is Inhibitory synaptic factor 1, found in Homo sapiens (Human).